Here is a 1117-residue protein sequence, read N- to C-terminus: Cytospin-A (1117 aa).

Disordered regions lie at residues 1–176 (MKKA…NQIS), 293–323 (SLSP…GSVE), and 358–390 (SSDD…NASE). A compositionally biased stretch (low complexity) spans 45–90 (TAASLSKTKSSDDLLAGMAGGVTVTNGVKGKKSTCPSAAPSASAPA). Residues 93 to 117 (TVENKSKISTGTASSTKRNTSTGNK) are compositionally biased toward polar residues. 2 stretches are compositionally biased toward basic and acidic residues: residues 120 to 131 (SSTRERLRERTR) and 158 to 171 (TATE…KSKS). Residues 168-280 (KSKSDNQISD…LNALGFSLEQ (113 aa)) are a coiled coil. Residues 293–303 (SLSPEITPGNQ) show a composition bias toward polar residues. Over residues 358–377 (SSDDALDAPSSSESEGIPSI) the composition is skewed to low complexity. Residues serine 384, serine 385, and serine 389 each carry the phosphoserine modification. 2 coiled-coil regions span residues 394 to 449 (ACLT…MESL) and 487 to 807 (RYME…RGRV). A phosphoserine mark is found at serine 868, serine 881, and serine 887. Positions 919 to 1001 (RTSSASRPAS…SRIREERKDP (83 aa)) are disordered. Positions 946 to 956 (RSSEEMKRDIS) are enriched in basic and acidic residues. Over residues 971-990 (TTSPQLSLSSSPTASVTPTT) the composition is skewed to low complexity. A Calponin-homology (CH) domain is found at 1011–1116 (GSKRNALLKW…YVTAIYKYFE (106 aa)).

This sequence belongs to the cytospin-A family. May interact with both microtubules and actin cytoskeleton.

It localises to the cytoplasm. The protein resides in the cytoskeleton. Its subcellular location is the spindle. It is found in the cell junction. The protein localises to the gap junction. In terms of biological role, involved in cytokinesis and spindle organization. May play a role in actin cytoskeleton organization and microtubule stabilization and hence required for proper cell adhesion and migration. The polypeptide is Cytospin-A (SPECC1L) (Pan troglodytes (Chimpanzee)).